The following is a 155-amino-acid chain: uncharacterized protein (155 aa).

A Macro domain is found at 1–155; it reads MIVKYIKGDI…IVIVDWEPLL (155 aa).

This is an uncharacterized protein from Escherichia coli (Bacteriophage T4).